Here is a 290-residue protein sequence, read N- to C-terminus: 4-hydroxy-tetrahydrodipicolinate synthase (290 aa).

A pyruvate-binding site is contributed by Thr-44. The active-site Proton donor/acceptor is the Tyr-132. Catalysis depends on Lys-160, which acts as the Schiff-base intermediate with substrate. Ile-202 serves as a coordination point for pyruvate.

This sequence belongs to the DapA family. Homotetramer; dimer of dimers.

The protein resides in the cytoplasm. The enzyme catalyses L-aspartate 4-semialdehyde + pyruvate = (2S,4S)-4-hydroxy-2,3,4,5-tetrahydrodipicolinate + H2O + H(+). It functions in the pathway amino-acid biosynthesis; L-lysine biosynthesis via DAP pathway; (S)-tetrahydrodipicolinate from L-aspartate: step 3/4. Functionally, catalyzes the condensation of (S)-aspartate-beta-semialdehyde [(S)-ASA] and pyruvate to 4-hydroxy-tetrahydrodipicolinate (HTPA). This is 4-hydroxy-tetrahydrodipicolinate synthase from Cereibacter sphaeroides (strain ATCC 17025 / ATH 2.4.3) (Rhodobacter sphaeroides).